Consider the following 296-residue polypeptide: Light-inducible protein CPRF3 (296 aa).

Disordered stretches follow at residues 1 to 27 (MSDG…ITTT), 98 to 165 (PNLA…GSLE), and 190 to 223 (RVND…KSDE). Basic and acidic residues predominate over residues 107-117 (VGRKISDEKGR). Positions 145 to 156 (SSSDNDCPSLSS) are enriched in low complexity. Positions 196 to 259 (ELKRQRRKQS…AEVTSENHSI (64 aa)) constitute a bZIP domain. The basic motif stretch occupies residues 198–220 (KRQRRKQSNRESARRSRLRKQAK). Residues 224 to 245 (LQERLDNLSKENRILRKNLQRI) are leucine-zipper.

It belongs to the bZIP family. Binds DNA as a dimer.

It is found in the nucleus. Binds to the G-box-like motif (5'-ACGTGGC-3') of the chalcone synthase (CHS) gene promoter. G-box and G-box-like motifs are defined in promoters of certain plant genes which are regulated by such diverse stimuli as light-induction or hormone control. The chain is Light-inducible protein CPRF3 (CPRF3) from Petroselinum crispum (Parsley).